The following is a 208-amino-acid chain: MSSFQLPKLSYDYDELEPHIDSNTLSIHHGKHHATYVNNLNATLENYTELHNKSLEELLCNLDTLPKEIVTAVRNNGGGHYCHSLFWEVMSPRGGGEPNGDVAKVIDYYFNTFDNLKDQLSKAAISRFGSGYGWLVLDGEELSVMSTPNQDTPLQEGKIPLLVIDVWEHAYYLKYQNRRPEFVTNWWHTVNWDQVNEKYLQAIQSQKH.

Residues histidine 28, histidine 83, aspartate 165, and histidine 169 each coordinate Mn(2+).

Belongs to the iron/manganese superoxide dismutase family. In terms of assembly, homodimer. Requires Mn(2+) as cofactor.

The enzyme catalyses 2 superoxide + 2 H(+) = H2O2 + O2. In terms of biological role, destroys superoxide anion radicals which are normally produced within the cells and which are toxic to biological systems. The chain is Superoxide dismutase [Mn] 2 (sodA2) from Bacillus cereus (strain ATCC 14579 / DSM 31 / CCUG 7414 / JCM 2152 / NBRC 15305 / NCIMB 9373 / NCTC 2599 / NRRL B-3711).